The sequence spans 169 residues: Crossover junction endodeoxyribonuclease RuvC (169 aa).

Residues D11, E71, and H143 contribute to the active site. 3 residues coordinate Mg(2+): D11, E71, and H143.

This sequence belongs to the RuvC family. In terms of assembly, homodimer which binds Holliday junction (HJ) DNA. The HJ becomes 2-fold symmetrical on binding to RuvC with unstacked arms; it has a different conformation from HJ DNA in complex with RuvA. In the full resolvosome a probable DNA-RuvA(4)-RuvB(12)-RuvC(2) complex forms which resolves the HJ. It depends on Mg(2+) as a cofactor.

The protein resides in the cytoplasm. The catalysed reaction is Endonucleolytic cleavage at a junction such as a reciprocal single-stranded crossover between two homologous DNA duplexes (Holliday junction).. Functionally, the RuvA-RuvB-RuvC complex processes Holliday junction (HJ) DNA during genetic recombination and DNA repair. Endonuclease that resolves HJ intermediates. Cleaves cruciform DNA by making single-stranded nicks across the HJ at symmetrical positions within the homologous arms, yielding a 5'-phosphate and a 3'-hydroxyl group; requires a central core of homology in the junction. The consensus cleavage sequence is 5'-(A/T)TT(C/G)-3'. Cleavage occurs on the 3'-side of the TT dinucleotide at the point of strand exchange. HJ branch migration catalyzed by RuvA-RuvB allows RuvC to scan DNA until it finds its consensus sequence, where it cleaves and resolves the cruciform DNA. This Mesorhizobium japonicum (strain LMG 29417 / CECT 9101 / MAFF 303099) (Mesorhizobium loti (strain MAFF 303099)) protein is Crossover junction endodeoxyribonuclease RuvC.